Reading from the N-terminus, the 528-residue chain is Probable rhamnogalacturonate lyase A (528 aa).

A signal peptide spans 1–20; the sequence is MFFQTGLLLSLSLWTKVAYA. Intrachain disulfides connect C50–C93 and C184–C193. The N-linked (GlcNAc...) asparagine glycan is linked to N56. N351 carries an N-linked (GlcNAc...) asparagine glycan.

Belongs to the polysaccharide lyase 4 family.

It is found in the secreted. The catalysed reaction is Endotype eliminative cleavage of L-alpha-rhamnopyranosyl-(1-&gt;4)-alpha-D-galactopyranosyluronic acid bonds of rhamnogalacturonan I domains in ramified hairy regions of pectin leaving L-rhamnopyranose at the reducing end and 4-deoxy-4,5-unsaturated D-galactopyranosyluronic acid at the non-reducing end.. Its function is as follows. Pectinolytic enzymes consist of four classes of enzymes: pectin lyase, polygalacturonase, pectin methylesterase and rhamnogalacturonase. Degrades the rhamnogalacturonan I (RG-I) backbone of pectin. Active against linseed rhamnogalacturonan. The sequence is that of Probable rhamnogalacturonate lyase A (rglA) from Aspergillus clavatus (strain ATCC 1007 / CBS 513.65 / DSM 816 / NCTC 3887 / NRRL 1 / QM 1276 / 107).